The sequence spans 88 residues: uncharacterized protein (88 aa).

The first 22 residues, 1–22, serve as a signal peptide directing secretion; sequence MLKASILFITISLTLMLENSYG. 3 disulfide bridges follow: Cys-59–Cys-73, Cys-66–Cys-77, and Cys-72–Cys-82.

Its subcellular location is the secreted. This is an uncharacterized protein from Schistosoma japonicum (Blood fluke).